The primary structure comprises 166 residues: Twist-related protein (166 aa).

Low complexity predominate over residues 1-18; that stretch reads MMQEESSSPVSPVDSLSN. The tract at residues 1–83 is disordered; the sequence is MMQEESSSPV…RVMANVRERQ (83 aa). The span at 28–39 shows a compositional bias: basic residues; sequence SKRGCRKRRSAR. Residues 57 to 75 show a composition bias toward polar residues; the sequence is ASSTGSSPQSFEELQSQRV. Positions 72–123 constitute a bHLH domain; that stretch reads SQRVMANVRERQRTQSLNEAFSSLRKIIPTLPSDKLSKIQTLKLASRYIDFL.

In terms of assembly, efficient DNA binding requires dimerization with another bHLH protein. Homodimer. Subset of mesodermal cells.

The protein localises to the nucleus. Probable transcription factor, which may be involved, with other proteins, in establishing the pattern of cell type-specific gene expression in mesodermal cell subgroups. This Xenopus laevis (African clawed frog) protein is Twist-related protein (twist1).